Here is a 153-residue protein sequence, read N- to C-terminus: Cytochrome c-type biogenesis protein CcmE (153 aa).

At 1–6 (MNARRR) the chain is on the cytoplasmic side. A helical; Signal-anchor for type II membrane protein membrane pass occupies residues 7–27 (LWSVLMLILAVGTAATLTIMA). The Periplasmic segment spans residues 28 to 153 (LRHNLTYLYM…LDTPIAETTP (126 aa)). Heme is bound by residues His-121 and Tyr-125. Polar residues predominate over residues 131-141 (ANKMQPTPTQH). Positions 131–153 (ANKMQPTPTQHTHLDTPIAETTP) are disordered.

The protein belongs to the CcmE/CycJ family.

The protein localises to the cell inner membrane. Heme chaperone required for the biogenesis of c-type cytochromes. Transiently binds heme delivered by CcmC and transfers the heme to apo-cytochromes in a process facilitated by CcmF and CcmH. In Xylella fastidiosa (strain Temecula1 / ATCC 700964), this protein is Cytochrome c-type biogenesis protein CcmE.